The primary structure comprises 242 residues: 1-(5-phosphoribosyl)-5-[(5-phosphoribosylamino)methylideneamino] imidazole-4-carboxamide isomerase (242 aa).

The active-site Proton acceptor is the Asp10. Asp131 serves as the catalytic Proton donor.

This sequence belongs to the HisA/HisF family.

The protein localises to the cytoplasm. It catalyses the reaction 1-(5-phospho-beta-D-ribosyl)-5-[(5-phospho-beta-D-ribosylamino)methylideneamino]imidazole-4-carboxamide = 5-[(5-phospho-1-deoxy-D-ribulos-1-ylimino)methylamino]-1-(5-phospho-beta-D-ribosyl)imidazole-4-carboxamide. The protein operates within amino-acid biosynthesis; L-histidine biosynthesis; L-histidine from 5-phospho-alpha-D-ribose 1-diphosphate: step 4/9. The chain is 1-(5-phosphoribosyl)-5-[(5-phosphoribosylamino)methylideneamino] imidazole-4-carboxamide isomerase from Bifidobacterium animalis subsp. lactis (strain AD011).